The sequence spans 251 residues: Large ribosomal subunit protein uL16m (251 aa).

The N-terminal 29 residues, 1 to 29 (MWRLLTRVPAPLLRMHFSDSWAALPTSAG), are a transit peptide targeting the mitochondrion.

Belongs to the universal ribosomal protein uL16 family. In terms of assembly, component of the mitochondrial ribosome large subunit (39S) which comprises a 16S rRNA and about 50 distinct proteins.

The protein resides in the mitochondrion. This Mus musculus (Mouse) protein is Large ribosomal subunit protein uL16m (Mrpl16).